Consider the following 204-residue polypeptide: Inner membrane protein BB_0250 (204 aa).

5 consecutive transmembrane segments (helical) span residues 17 to 37 (IAYS…NVPI), 58 to 78 (ILIF…SFYI), 101 to 121 (YYYG…PFGV), 139 to 159 (FIVS…TLSF), and 172 to 192 (IKII…IIYV).

Belongs to the DedA family.

It is found in the cell inner membrane. Required for proper cell division and envelope integrity. This is Inner membrane protein BB_0250 from Borreliella burgdorferi (strain ATCC 35210 / DSM 4680 / CIP 102532 / B31) (Borrelia burgdorferi).